A 201-amino-acid polypeptide reads, in one-letter code: MGRKRGRKEYCPPIYKRQKVARVTNNGYLNFMTEYKKRFYGLSPQDMVHYAAKQWTQLSMAEKEAFKSKKPSTITLKSPAQYVACEMKSDVAGGQQSSCQRQSPSARLRESERRSSRSKTLCRSAKNRQRGKPKPQQSKRRLSHMGSAVAYIHFLRKFQRKNTELRTIDLLKTATRLWCRLPERHRHAFERPLWIVTIGKS.

The segment at 93-143 (GGQQSSCQRQSPSARLRESERRSSRSKTLCRSAKNRQRGKPKPQQSKRRLS) is disordered. Over residues 94–104 (GQQSSCQRQSP) the composition is skewed to polar residues. Positions 125–143 (AKNRQRGKPKPQQSKRRLS) are enriched in basic residues.

This sequence belongs to the UPF0771 family.

Its subcellular location is the nucleus. It is found in the chromosome. Functionally, regulates chromatin compaction in spermatid nuclei and is essential for male fertility. Functions in parallel with other chromatin-condensing proteins such as ProtA, ProtB and Mst77F. This is Protamine-like protein 99C from Drosophila melanogaster (Fruit fly).